The following is a 241-amino-acid chain: LexA repressor (241 aa).

Residues 26–46 (FDEMKTALDLRSKSGIHRLIT) constitute a DNA-binding region (H-T-H motif). Catalysis depends on for autocatalytic cleavage activity residues Ser-162 and Lys-200.

This sequence belongs to the peptidase S24 family. As to quaternary structure, homodimer.

It carries out the reaction Hydrolysis of Ala-|-Gly bond in repressor LexA.. Represses a number of genes involved in the response to DNA damage (SOS response), including recA and lexA. In the presence of single-stranded DNA, RecA interacts with LexA causing an autocatalytic cleavage which disrupts the DNA-binding part of LexA, leading to derepression of the SOS regulon and eventually DNA repair. The protein is LexA repressor of Ruegeria sp. (strain TM1040) (Silicibacter sp.).